The chain runs to 481 residues: Glutamyl-tRNA(Gln) amidotransferase subunit A (481 aa).

Active-site charge relay system residues include Lys74 and Ser149. Ser173 (acyl-ester intermediate) is an active-site residue.

This sequence belongs to the amidase family. GatA subfamily. Heterotrimer of A, B and C subunits.

It catalyses the reaction L-glutamyl-tRNA(Gln) + L-glutamine + ATP + H2O = L-glutaminyl-tRNA(Gln) + L-glutamate + ADP + phosphate + H(+). Allows the formation of correctly charged Gln-tRNA(Gln) through the transamidation of misacylated Glu-tRNA(Gln) in organisms which lack glutaminyl-tRNA synthetase. The reaction takes place in the presence of glutamine and ATP through an activated gamma-phospho-Glu-tRNA(Gln). The sequence is that of Glutamyl-tRNA(Gln) amidotransferase subunit A from Francisella tularensis subsp. novicida (strain U112).